The primary structure comprises 500 residues: Flt3-interacting zinc finger protein 1 (500 aa).

M1 carries the post-translational modification N-acetylmethionine. The disordered stretch occupies residues 1–24 (MEDSSLPVVPAPIAAPGPAPSATA). Residues 9-19 (VPAPIAAPGPA) are compositionally biased toward pro residues. 6 C2H2-type zinc fingers span residues 29-51 (FHCS…FARH), 57-79 (HACP…LRSH), 85-107 (YRCS…QVVH), 113-136 (YCCL…KRQH), 204-226 (FACG…WAAH), and 232-254 (FKCP…KLTH). 2 disordered regions span residues 255–284 (DLQG…ASEV) and 306–328 (KLEA…AAAE). Residues 256–267 (LQGSNAPPTQVW) are compositionally biased toward polar residues. 5 consecutive C2H2-type zinc fingers follow at residues 336 to 357 (YQCD…LEAH), 363 to 386 (YGCG…RASH), 418 to 440 (FGCS…VLVH), 446 to 468 (FPCL…RLLH), and 474 to 496 (FPCH…LKLH). Residues 383-415 (RASHGEGSGEAAPDGEGNQAAGGPGPGSSSRSK) form a disordered region.

In terms of assembly, interacts with FLT3 cytoplasmic catalytic domain, following receptor stimulation, in a kinase-independent manner. Does not interact with other structurally related receptor tyrosine kinases, including KIT, CSF1R and PDGFR. Interacts with NRL. As to expression, widely expressed. In the retina, highest expression in the ganglion cell layer.

The protein resides in the cytoplasm. Its subcellular location is the nucleus. Functionally, may be a transcriptional repressor of NRL function in photoreceptors. Does not repress CRX-mediated transactivation. The sequence is that of Flt3-interacting zinc finger protein 1 (Fiz1) from Mus musculus (Mouse).